The primary structure comprises 344 residues: Small ribosomal subunit protein uS3 (344 aa).

The 69-residue stretch at 38 to 106 (LKAALRERLK…EVFIDIQEVH (69 aa)) folds into the KH type-2 domain. The disordered stretch occupies residues 217-344 (PEPEPRREQR…QKPEGSGENQ (128 aa)). 2 stretches are compositionally biased toward basic and acidic residues: residues 219–259 (PEPR…RGDR) and 335–344 (QKPEGSGENQ).

This sequence belongs to the universal ribosomal protein uS3 family. Part of the 30S ribosomal subunit. Forms a tight complex with proteins S10 and S14.

In terms of biological role, binds the lower part of the 30S subunit head. Binds mRNA in the 70S ribosome, positioning it for translation. The protein is Small ribosomal subunit protein uS3 of Solibacter usitatus (strain Ellin6076).